The primary structure comprises 702 residues: Glucoamylase (702 aa).

Positions 1–21 are cleaved as a signal peptide; sequence MSRKLIKYLPLLVLASSVLSG. C22 carries N-palmitoyl cysteine lipidation. C22 is lipidated: S-diacylglycerol cysteine. Residue W342 coordinates substrate. The Proton acceptor role is filled by E452. The active-site Proton donor is the E455.

The protein belongs to the glycosyl hydrolase 15 family.

It localises to the cell membrane. It catalyses the reaction Hydrolysis of terminal (1-&gt;4)-linked alpha-D-glucose residues successively from non-reducing ends of the chains with release of beta-D-glucose.. Its function is as follows. CGA has typical kinetic properties for a glucoamylase, but this bacterial enzyme had higher isomaltose-hydrolyzing activity than other eukaryotic glucoamylases. The protein is Glucoamylase (cga) of Clostridium sp. (strain G0005).